We begin with the raw amino-acid sequence, 862 residues long: Valine--tRNA ligase (862 aa).

A 'HIGH' region motif is present at residues 44-53; that stretch reads NVTGSLHMGH. Residues Cys-176, Cys-179, Cys-344, Cys-347, Cys-417, Cys-420, Cys-438, and Cys-441 each contribute to the Zn(2+) site. Residues 528 to 532 carry the 'KMSKS' region motif; sequence KMSKS. An ATP-binding site is contributed by Lys-531. The stretch at 802–862 forms a coiled coil; sequence RRRQEKRLKE…RIREALSQIG (61 aa).

The protein belongs to the class-I aminoacyl-tRNA synthetase family. ValS type 1 subfamily. Monomer. Zn(2+) serves as cofactor.

It localises to the cytoplasm. It carries out the reaction tRNA(Val) + L-valine + ATP = L-valyl-tRNA(Val) + AMP + diphosphate. Its function is as follows. Catalyzes the attachment of valine to tRNA(Val). As ValRS can inadvertently accommodate and process structurally similar amino acids such as threonine, to avoid such errors, it has a 'posttransfer' editing activity that hydrolyzes mischarged Thr-tRNA(Val) in a tRNA-dependent manner. The sequence is that of Valine--tRNA ligase from Thermus thermophilus (strain ATCC 27634 / DSM 579 / HB8).